A 321-amino-acid chain; its full sequence is Solute carrier family 25 member 33 (321 aa).

3 Solcar repeats span residues 9-118, 126-213, and 231-315; these read ENTL…AKEQ, NSNI…LKKY, and TSFF…IVYL. Transmembrane regions (helical) follow at residues 12–32, 49–65, 121–141, 190–210, 233–253, and 298–318; these read LLHL…TCPL, VYYP…AGMV, GIFV…AAFI, LTAS…YESL, FFGL…IAYP, and QIPN…LLED.

Belongs to the mitochondrial carrier (TC 2.A.29) family. In terms of tissue distribution, expressed in the central nervous system. Also expressed in testis and skeletal muscle. Weakly expressed in heart, liver, kidney, prostate, colon and peripheral blood leukocytes.

The protein resides in the mitochondrion inner membrane. It catalyses the reaction UTP(in) + UDP(out) = UTP(out) + UDP(in). The catalysed reaction is dUTP(out) + UTP(in) = dUTP(in) + UTP(out). It carries out the reaction 5-methyl-UTP(out) + UTP(in) = 5-methyl-UTP(in) + UTP(out). The enzyme catalyses 5-methyl-UDP(out) + UTP(in) = 5-methyl-UDP(in) + UTP(out). It catalyses the reaction UTP(in) + CTP(out) = UTP(out) + CTP(in). The catalysed reaction is CDP(out) + UTP(in) = CDP(in) + UTP(out). It carries out the reaction dCTP(out) + UTP(in) = dCTP(in) + UTP(out). The enzyme catalyses dCDP(out) + UTP(in) = dCDP(in) + UTP(out). It catalyses the reaction UTP(in) + GTP(out) = UTP(out) + GTP(in). The catalysed reaction is UTP(in) + GDP(out) = UTP(out) + GDP(in). It carries out the reaction dGTP(out) + UTP(in) = dGTP(in) + UTP(out). The enzyme catalyses dGDP(out) + UTP(in) = dGDP(in) + UTP(out). It catalyses the reaction ITP(out) + UTP(in) = ITP(in) + UTP(out). Inhibited by pyridoxal 5'-phosphate, 4,7-diphenyl-1,10-phenanthroline, tannic acid, and mercurials (mercury dichloride, mersalyl acid, p-hydroxymercuribenzoate). Mitochondrial transporter that imports/exports pyrimidine nucleotides into and from mitochondria. Selectively transports uridine, thymidine, guanosine, cytosine and inosine (deoxy)nucleoside di- and triphosphates by an antiport mechanism. May import (deoxy)nucleoside triphosphates in exchange for intramitochondrial (deoxy)nucleoside diphosphates, thus providing precursors necessary for de novo synthesis of mitochondrial DNA and RNA while exporting products of their catabolism. Participates in mitochondrial genome maintenance, regulation of mitochondrial membrane potential and mitochondrial respiration. Upon INS or IGF1 stimulation regulates cell growth and proliferation by controlling mitochondrial DNA replication and transcription, the ratio of mitochondria-to nuclear-encoded components of the electron transport chain resulting in control of mitochondrial ROS production. Participates in dendritic cell endocytosis and may associate with mitochondrial oxidative phosphorylation. In Homo sapiens (Human), this protein is Solute carrier family 25 member 33 (SLC25A33).